The chain runs to 321 residues: Ribose-phosphate pyrophosphokinase (321 aa).

ATP contacts are provided by residues D39–E41 and R98–Q99. Mg(2+)-binding residues include H132 and D170. The active site involves K195. D-ribose 5-phosphate is bound by residues R197, D221, and D225–T229.

This sequence belongs to the ribose-phosphate pyrophosphokinase family. Class I subfamily. In terms of assembly, homohexamer. The cofactor is Mg(2+).

The protein resides in the cytoplasm. It catalyses the reaction D-ribose 5-phosphate + ATP = 5-phospho-alpha-D-ribose 1-diphosphate + AMP + H(+). Its pathway is metabolic intermediate biosynthesis; 5-phospho-alpha-D-ribose 1-diphosphate biosynthesis; 5-phospho-alpha-D-ribose 1-diphosphate from D-ribose 5-phosphate (route I): step 1/1. In terms of biological role, involved in the biosynthesis of the central metabolite phospho-alpha-D-ribosyl-1-pyrophosphate (PRPP) via the transfer of pyrophosphoryl group from ATP to 1-hydroxyl of ribose-5-phosphate (Rib-5-P). This chain is Ribose-phosphate pyrophosphokinase, found in Mycoplasmopsis pulmonis (strain UAB CTIP) (Mycoplasma pulmonis).